Here is a 46-residue protein sequence, read N- to C-terminus: Mu-segestritoxin-Sf1c (46 aa).

4 disulfides stabilise this stretch: Cys-3-Cys-19, Cys-10-Cys-22, Cys-18-Cys-42, and Cys-24-Cys-40. The tract at residues 31-33 (RPW) is keys region for toxin activity.

This sequence belongs to the neurotoxin 16 (SFI) family. As to expression, expressed by the venom gland.

The protein localises to the secreted. Insecticidal toxin. It inhibits insect voltage-gated sodium channels (Nav) by partially blocking the channel pore in DUM neurons from the American cockroach, not by acting as a gating modifier. The inhibition is only partially reversible after prolonged washout. In vivo, the toxin causes flaccid paralysis followed by death when injected into Heliothis virescens larvae. It also causes uncoordinated movements followed by full paralysis to sheep blowflies (Lucilia cuprina). When the toxin is fused to snowdrop lectin, it is orally active against larvae of the tomato moth (Laconobia oleracea), the rice brown planthopper (Nilaparvata lugens), and the peach-potato aphid (Myzus persicae). This is Mu-segestritoxin-Sf1c from Segestria florentina (Tube-web spider).